A 918-amino-acid chain; its full sequence is MIAAQLLAYYFTELKDDQVKKIDKYLYAMRLSDEILIDILTRFKKEMKNGLSRDYNPTASVKMLPTFVRSIPDGSEKGDFIALDLGGSSFRILRVQVNHEKNQNVSMESEIYDTPENIVHGSGTQLFDHVADCLGDFMEKKKIKDKKLPVGFTFSFPCRQSKIDEAVLITWTKRFKASGVEGADVVKLLNKAIKKRGDYDANIVAVVNDTVGTMMTCGYDDQQCEVGLIIGTGTNACYMEELRHIDLVEGDEGRMCINTEWGAFGDDGSLEDIRTEFDRELDRGSLNPGKQLFEKMVSGMYMGELVRLILVKMAKEGLLFEGRITPELLTRGKFNTSDVSAIEKDKEGIQNAKEILTRLGVEPSDVDCVSVQHICTIVSFRSANLVAATLGAILNRLRDNKGTPRLRTTVGVDGSLYKMHPQYSRRFHKTLRRLVPDSDVRFLLSESGTGKGAAMVTAVAYRLAEQHRQIEETLAHFRLSKQTLMEVKKRLRTEMEMGLRKETNSKATVKMLPSFVRSIPDGTEHGDFLALDLGGTNFRVLLVKIRSGKKRTVEMHNKIYSIPLEIMQGTGDELFDHIVSCISDFLDYMGIKGPRMPLGFTFSFPCHQTNLDCGILISWTKGFKATDCEGHDVASLLRDAVKRREEFDLDVVAVVNDTVGTMMTCAYEEPTCEIGLIVGTGTNACYMEEMKNVEMVEGNQGQMCINMEWGAFGDNGCLDDIRTDFDKVVDEYSLNSGKQRFEKMISGMYLGEIVRNILIDFTKKGFLFRGQISEPLKTRGIFETKFLSQIESDRLALLQVRAILQQLGLNSTCDDSILVKTVCGVVSKRAAQLCGAGMAAVVEKIRENRGLDHLNVTVGVDGTLYKLHPHFSRIMHQTVKELSPKCTVSFLLSEDGSGKGAALITAVGVRLRGDPSIA.

Met-1 bears the N-acetylmethionine mark. The segment at 1–10 (MIAAQLLAYY) is mitochondrial-binding peptide (MBP). 2 consecutive Hexokinase domains span residues 16-458 (DDQV…MVTA) and 464-906 (AEQH…LITA). ATP is bound by residues Arg-30 and 84–89 (DLGGSS). The hexokinase small subdomain 1 stretch occupies residues 73–207 (DGSEKGDFIA…DYDANIVAVV (135 aa)). 84–88 (DLGGS) contributes to the D-glucose 6-phosphate binding site. D-glucose contacts are provided by residues Ser-155, 172 to 173 (TK), and 208 to 209 (ND). The hexokinase large subdomain 1 stretch occupies residues 208-447 (NDTVGTMMTC…SDVRFLLSES (240 aa)). Residues Asp-209 and Thr-232 each contribute to the D-glucose 6-phosphate site. D-glucose is bound by residues Asn-235, Glu-260, and 291–294 (QLFE). Position 337 is a phosphoserine (Ser-337). Residue 413 to 415 (DGS) participates in D-glucose 6-phosphate binding. 425-426 (RR) is an ATP binding site. D-glucose 6-phosphate contacts are provided by residues Thr-449, 532 to 536 (DLGGT), and Ser-603. The tract at residues 521–655 (DGTEHGDFLA…EFDLDVVAVV (135 aa)) is hexokinase small subdomain 2. Position 532–537 (532–537 (DLGGTN)) interacts with ATP. D-glucose is bound by residues 620-621 (TK) and 656-657 (ND). The segment at 656–895 (NDTVGTMMTC…CTVSFLLSED (240 aa)) is hexokinase large subdomain 2. Residues Asp-657 and Thr-680 each contribute to the D-glucose 6-phosphate site. Thr-680 contacts ATP. Residues Asn-683, Glu-708, and Glu-742 each contribute to the D-glucose site. ATP-binding positions include 747 to 748 (GM), 784 to 788 (TKFLS), and 863 to 867 (TLYKL). Residues 861-863 (DGT) and Ser-897 each bind D-glucose 6-phosphate.

This sequence belongs to the hexokinase family. Monomer. Interacts with RABL2/RABL2A; binds preferentially to GTP-bound RABL2. Interacts with VDAC1. The HK1-VDAC1 complex interacts with ATF2. Interacts (via N-terminal spermatogenic cell-specific region) with PFKM (via C-terminus). Interacts with SMAD5. In terms of tissue distribution, expressed in flagella of epididymal sperm.

Its subcellular location is the mitochondrion outer membrane. The protein resides in the cytoplasm. It is found in the cytosol. The catalysed reaction is a D-hexose + ATP = a D-hexose 6-phosphate + ADP + H(+). The enzyme catalyses D-fructose + ATP = D-fructose 6-phosphate + ADP + H(+). It carries out the reaction D-glucose + ATP = D-glucose 6-phosphate + ADP + H(+). It catalyses the reaction D-mannose + ATP = D-mannose 6-phosphate + ADP + H(+). The catalysed reaction is D-glucosamine + ATP = D-glucosamine 6-phosphate + ADP + H(+). The protein operates within carbohydrate metabolism; hexose metabolism. It participates in carbohydrate degradation; glycolysis; D-glyceraldehyde 3-phosphate and glycerone phosphate from D-glucose: step 1/4. Hexokinase is an allosteric enzyme inhibited by its product D-glucose 6-phosphate. Hexokinase activity is inhibited by N-acetyl-D-glucosamine. Functionally, catalyzes the phosphorylation of various hexoses, such as D-glucose, D-glucosamine, D-fructose, D-mannose and 2-deoxy-D-glucose, to hexose 6-phosphate (D-glucose 6-phosphate, D-glucosamine 6-phosphate, D-fructose 6-phosphate, D-mannose 6-phosphate and 2-deoxy-D-glucose 6-phosphate, respectively). Mediates the initial step of glycolysis by catalyzing phosphorylation of D-glucose to D-glucose 6-phosphate. Involved in innate immunity and inflammation by acting as a pattern recognition receptor for bacterial peptidoglycan. When released in the cytosol, N-acetyl-D-glucosamine component of bacterial peptidoglycan inhibits the hexokinase activity of HK1 and causes its dissociation from mitochondrial outer membrane, thereby activating the NLRP3 inflammasome. In Rattus norvegicus (Rat), this protein is Hexokinase-1.